Reading from the N-terminus, the 400-residue chain is Enoyl-[acyl-carrier-protein] reductase [NADH] (400 aa).

Residues 48–53 (GSSSGY), 74–75 (FE), 111–112 (DA), and 139–140 (LA) each bind NAD(+). A substrate-binding site is contributed by Y225. Y235 serves as the catalytic Proton donor. NAD(+) is bound by residues K244 and 273–275 (VVT).

The protein belongs to the TER reductase family. In terms of assembly, monomer.

The catalysed reaction is a 2,3-saturated acyl-[ACP] + NAD(+) = a (2E)-enoyl-[ACP] + NADH + H(+). The protein operates within lipid metabolism; fatty acid biosynthesis. Involved in the final reduction of the elongation cycle of fatty acid synthesis (FAS II). Catalyzes the reduction of a carbon-carbon double bond in an enoyl moiety that is covalently linked to an acyl carrier protein (ACP). The chain is Enoyl-[acyl-carrier-protein] reductase [NADH] from Aliivibrio salmonicida (strain LFI1238) (Vibrio salmonicida (strain LFI1238)).